A 159-amino-acid polypeptide reads, in one-letter code: Putative pre-16S rRNA nuclease (159 aa).

The protein belongs to the YqgF nuclease family.

It is found in the cytoplasm. Could be a nuclease involved in processing of the 5'-end of pre-16S rRNA. In Agrobacterium fabrum (strain C58 / ATCC 33970) (Agrobacterium tumefaciens (strain C58)), this protein is Putative pre-16S rRNA nuclease.